The following is a 549-amino-acid chain: Cytoplasmic trehalase (549 aa).

Residues Arg168, 175–176, Asn212, 221–223, 292–294, and Gly324 contribute to the substrate site; these read WD, RSQ, and RDE. Active-site proton donor/acceptor residues include Asp326 and Glu509. Residue Glu525 coordinates substrate.

This sequence belongs to the glycosyl hydrolase 37 family. Monomer.

The protein resides in the cytoplasm. It catalyses the reaction alpha,alpha-trehalose + H2O = alpha-D-glucose + beta-D-glucose. It functions in the pathway glycan degradation; trehalose degradation; D-glucose from alpha,alpha-trehalose: step 1/1. Its function is as follows. Hydrolyzes trehalose to glucose. Could be involved, in cells returning to low osmolarity conditions, in the utilization of the accumulated cytoplasmic trehalose, which was synthesized in response to high osmolarity. The sequence is that of Cytoplasmic trehalase from Shigella boydii serotype 4 (strain Sb227).